A 301-amino-acid polypeptide reads, in one-letter code: tRNA dimethylallyltransferase 2 (301 aa).

An ATP-binding site is contributed by glycine 11 to threonine 18. Threonine 13–threonine 18 contributes to the substrate binding site. Residues aspartate 36–glutamine 39 form an interaction with substrate tRNA region.

This sequence belongs to the IPP transferase family. Monomer. Requires Mg(2+) as cofactor.

The enzyme catalyses adenosine(37) in tRNA + dimethylallyl diphosphate = N(6)-dimethylallyladenosine(37) in tRNA + diphosphate. In terms of biological role, catalyzes the transfer of a dimethylallyl group onto the adenine at position 37 in tRNAs that read codons beginning with uridine, leading to the formation of N6-(dimethylallyl)adenosine (i(6)A). The polypeptide is tRNA dimethylallyltransferase 2 (Shewanella sediminis (strain HAW-EB3)).